The following is a 398-amino-acid chain: Chalcone synthase 1 (398 aa).

Residue 58 to 65 (KFKRMCDK) coordinates CoA. Catalysis depends on cysteine 167, which acts as the Acyl-thioester intermediate. Substrate-binding positions include threonine 200 and 219–220 (GD). Alanine 311 provides a ligand contact to CoA.

Belongs to the thiolase-like superfamily. Chalcone/stilbene synthases family. Homodimer.

The catalysed reaction is (E)-4-coumaroyl-CoA + 3 malonyl-CoA + 3 H(+) = 2',4,4',6'-tetrahydroxychalcone + 3 CO2 + 4 CoA. It participates in secondary metabolite biosynthesis; flavonoid biosynthesis. The primary product of this enzyme is 4,2',4',6'-tetrahydroxychalcone (also termed naringenin-chalcone or chalcone) which can under specific conditions spontaneously isomerize into naringenin. The chain is Chalcone synthase 1 (CHS1) from Oryza sativa subsp. japonica (Rice).